A 316-amino-acid polypeptide reads, in one-letter code: Methionyl-tRNA formyltransferase (316 aa).

(6S)-5,6,7,8-tetrahydrofolate is bound at residue 114 to 117 (SLLP).

Belongs to the Fmt family.

The catalysed reaction is L-methionyl-tRNA(fMet) + (6R)-10-formyltetrahydrofolate = N-formyl-L-methionyl-tRNA(fMet) + (6S)-5,6,7,8-tetrahydrofolate + H(+). In terms of biological role, attaches a formyl group to the free amino group of methionyl-tRNA(fMet). The formyl group appears to play a dual role in the initiator identity of N-formylmethionyl-tRNA by promoting its recognition by IF2 and preventing the misappropriation of this tRNA by the elongation apparatus. The protein is Methionyl-tRNA formyltransferase of Aromatoleum aromaticum (strain DSM 19018 / LMG 30748 / EbN1) (Azoarcus sp. (strain EbN1)).